Reading from the N-terminus, the 129-residue chain is NADPH-dependent 7-cyano-7-deazaguanine reductase (129 aa).

C34 acts as the Thioimide intermediate in catalysis. Catalysis depends on D41, which acts as the Proton donor. Substrate is bound by residues 56–58 and 75–76; these read VEL and HE.

Belongs to the GTP cyclohydrolase I family. QueF type 1 subfamily.

The protein resides in the cytoplasm. It carries out the reaction 7-aminomethyl-7-carbaguanine + 2 NADP(+) = 7-cyano-7-deazaguanine + 2 NADPH + 3 H(+). It participates in tRNA modification; tRNA-queuosine biosynthesis. Its function is as follows. Catalyzes the NADPH-dependent reduction of 7-cyano-7-deazaguanine (preQ0) to 7-aminomethyl-7-deazaguanine (preQ1). This is NADPH-dependent 7-cyano-7-deazaguanine reductase from Alkalilimnicola ehrlichii (strain ATCC BAA-1101 / DSM 17681 / MLHE-1).